The chain runs to 498 residues: Angiopoietin-1 (498 aa).

The first 19 residues, M1–C19, serve as a signal peptide directing secretion. The stretch at Q81 to A119 forms a coiled coil. N-linked (GlcNAc...) asparagine glycans are attached at residues N92, N122, N154, N243, and N295. Residues L153–L261 are a coiled coil. The Fibrinogen C-terminal domain occupies R277–D497. Disulfide bonds link C286–C315 and C439–C452.

Homooligomer. Interacts with TEK/TIE2. Interacts with SVEP1/polydom. Interacts with THBD; this interaction significantly inhibits the generation of activated PC and TAFIa/CPB2 by the thrombin/thrombomodulin complex.

The protein resides in the secreted. Functionally, binds and activates TEK/TIE2 receptor by inducing its dimerization and tyrosine phosphorylation. Plays an important role in the regulation of angiogenesis, endothelial cell survival, proliferation, migration, adhesion and cell spreading, reorganization of the actin cytoskeleton, but also maintenance of vascular quiescence. Required for normal angiogenesis and heart development during embryogenesis. After birth, activates or inhibits angiogenesis, depending on the context. Inhibits angiogenesis and promotes vascular stability in quiescent vessels, where endothelial cells have tight contacts. In quiescent vessels, ANGPT1 oligomers recruit TEK to cell-cell contacts, forming complexes with TEK molecules from adjoining cells, and this leads to preferential activation of phosphatidylinositol 3-kinase and the AKT1 signaling cascades. In migrating endothelial cells that lack cell-cell adhesions, ANGT1 recruits TEK to contacts with the extracellular matrix, leading to the formation of focal adhesion complexes, activation of PTK2/FAK and of the downstream kinases MAPK1/ERK2 and MAPK3/ERK1, and ultimately to the stimulation of sprouting angiogenesis. Mediates blood vessel maturation/stability. Implicated in endothelial developmental processes later and distinct from that of VEGF. Appears to play a crucial role in mediating reciprocal interactions between the endothelium and surrounding matrix and mesenchyme. This is Angiopoietin-1 (Angpt1) from Mus musculus (Mouse).